A 233-amino-acid polypeptide reads, in one-letter code: Beta-fibrinogenase brevinase (233 aa).

The 224-residue stretch at 1 to 224 folds into the Peptidase S1 domain; the sequence is VIGGDECNIN…YIDWIQSIIA (224 aa). Disulfide bonds link C7–C138, C25–C41, C73–C231, C117–C185, C149–C164, and C175–C200. H40 (charge relay system) is an active-site residue. N-linked (GlcNAc...) asparagine glycosylation is present at N54. The active-site Charge relay system is D85. N129 carries an N-linked (GlcNAc...) asparagine glycan. The short motif at 176–178 is the Cell attachment site element; the sequence is RGD. S179 serves as the catalytic Charge relay system. An N-linked (GlcNAc...) asparagine glycan is attached at N226.

Belongs to the peptidase S1 family. Snake venom subfamily. As to quaternary structure, heterodimer of the brevinase A chain and the brevinase B chain. Expressed by the venom gland.

The protein localises to the secreted. With respect to regulation, the fibrinolytic activity is completely inhibited by PMSF, diisopropylfluorophosphate (DFP), pefabloc, dithiothreitol (DTT) and Zn(2+), but not by Pepstatin A, E64, iodoacetate, chymostatin, tosyl-Lphenylalanine chloromethyl ketone (TPCK), soybean trypsin inhibitor (SBTI), phosphoramidon, Ca(2+), Co(2+), Cu(2+), Fe(2+), Mg(2+), Mn(2+), K(+), and Na(+). In terms of biological role, snake venom serine protease that has fibrinogenolytic activities. Preferentially cleaves the Bbeta-chain (FGB) and more slowly the Aa-chain (FGA) of fibrinogen, but does not affect the gamma-chain. Also has fibrinolytic activity. May play a role in antithrombotic reaction as well as thrombolytic reaction. The chain is Beta-fibrinogenase brevinase from Gloydius blomhoffii (Mamushi).